The chain runs to 153 residues: ORM1-like protein 3 (153 aa).

The tract at residues Met1–Met17 is important for ceramide level-sensing. Residues Met1 to Gly21 are Cytoplasmic-facing. The next 2 helical transmembrane spans lie at Ile22–Phe42 and Val43–Phe63. At Leu64–Gln94 the chain is on the cytoplasmic side. A helical membrane pass occupies residues Phe95–Thr117. Topologically, residues Lys118–Gln121 are extracellular. The chain crosses the membrane as a helical span at residues Val122–Leu142. Pro137 is subject to Hydroxyproline. The Cytoplasmic segment spans residues His143 to Tyr153.

This sequence belongs to the ORM family. Ceramide-sensitive subunit of the serine palmitoyltransferase (SPT) complex, which is also composed of SPTLC1, SPTLC2/3 and SPTSSA/B. When hydroxylated at Pro-137, ubiquitinated via 'Lys-48'-linkage, leading to proteasomal degradation. In endothelial cells, ORMDL3 proteasomal degradation is controlled by the sphingosine 1-phosphate receptor signaling pathway.

The protein resides in the endoplasmic reticulum membrane. Its function is as follows. Plays an essential role in the homeostatic regulation of sphingolipid de novo biosynthesis by modulating the activity of the serine palmitoyltransferase (SPT) in response to ceramide levels. When complexed to SPT, the binding of ceramides to its N-terminus stabilizes a conformation that block SPT substrate entry, hence preventing SPT catalytic activity. Through this mechanism, maintains ceramide levels at sufficient concentrations for the production of complex sphingolipids, but which prevents the accumulation of ceramides to levels that trigger apoptosis. This chain is ORM1-like protein 3 (Ormdl3), found in Mus musculus (Mouse).